A 129-amino-acid chain; its full sequence is Large-conductance mechanosensitive channel (129 aa).

2 consecutive transmembrane segments (helical) span residues Phe10–Gly30 and Ala70–Ile90.

Belongs to the MscL family. As to quaternary structure, homopentamer.

It is found in the cell inner membrane. Its function is as follows. Channel that opens in response to stretch forces in the membrane lipid bilayer. May participate in the regulation of osmotic pressure changes within the cell. The chain is Large-conductance mechanosensitive channel from Actinobacillus pleuropneumoniae serotype 3 (strain JL03).